The primary structure comprises 638 residues: Actin-regulating kinase 1 (638 aa).

In terms of domain architecture, Protein kinase spans Val-22–Ile-298. Residues Leu-28–Val-36 and Lys-56 each bind ATP. Residue Asp-159 is the Proton acceptor of the active site. Ser-478 is modified (phosphoserine). The span at Tyr-482–Val-515 shows a compositional bias: polar residues. Residues Tyr-482 to Lys-518 are disordered. Ser-522 and Ser-535 each carry phosphoserine. The disordered stretch occupies residues Ser-569–Lys-638. The segment covering Lys-582 to Thr-593 has biased composition (basic and acidic residues). The tract at residues Ser-602–Pro-615 is interaction with SH3 domain of ABP1.

The protein belongs to the protein kinase superfamily. Ser/Thr protein kinase family. As to quaternary structure, interacts with ABP1, which is required for proper actin patch localization.

Its subcellular location is the cytoplasm. It is found in the cytoskeleton. The protein localises to the actin patch. The enzyme catalyses L-seryl-[protein] + ATP = O-phospho-L-seryl-[protein] + ADP + H(+). It carries out the reaction L-threonyl-[protein] + ATP = O-phospho-L-threonyl-[protein] + ADP + H(+). Its function is as follows. Involved in regulation of actin cytoskeleton organization and endocytosis. In Saccharomyces cerevisiae (strain ATCC 204508 / S288c) (Baker's yeast), this protein is Actin-regulating kinase 1 (ARK1).